The sequence spans 711 residues: MATSSVSKGCFVFKPDFKKRKISVPIEDYFNNEELDSEDSKLRFETYRLLWQRIKSETEQLQEGLNENLFDNLVDFLQKSHSEFQKNSGNWGSQMRLREIPTAALILGVNVTDHDVIFRSLTETLHNNVTPYVVSLQAKDCPDVKHFLQKLTSELIDCCVDRNSKEEKNDKALRRTSYSMDSLSSWYSTVAQKTGPKMTSKKRATCSQWQSPPVVLILKNMESFSTKVLQDFIIISSQHLHEFPLILIFGIATSPVIIHRLLPHSVSSLLCIELFQSLSCKEHLTVVLDKLLLTPQFPFKLSKKALQVLTNIFLYHDFSIQNFIKGLKLSLLEHFYSQPLSVLCCDLSEAKKRINVFSVNQCEKIRRLPSFRRYVENQPLEKQVALLTNETFLKEETQSLLEDLHVYHINYFLVLRCLHNFTSSLPKYPLGRQIRELYCTCLEKKIWDSEEYESALQLLRMLAKDELMGILEQCVKVLNSSTEKQLSNTAQKIKGFLTQFQNLDDSKEEEDACGSQPKGLQKTDLYHLQKSLLEMKELRRTTKKPTKFEMLRENVINFIDNLVRDYLLPPEGQPLHEVVYFSAANTLREHLNAAPRIALHTALNNPYYYLKNEALKSEEGCIPSVAPDICIAYKLHLECSRLINLVDWSEAFATVVTAAEKMDTNSTVSEEMSEIIHARFIRAVSELELLGFIKPTKQKTDHVARLTWGGC.

A phosphoserine mark is found at Ser-23 and Ser-515.

Belongs to the ORC3 family. In terms of assembly, component of ORC, a complex composed of at least 6 subunits: ORC1, ORC2, ORC3, ORC4, ORC5 and ORC6. ORC is regulated in a cell-cycle dependent manner. It is sequentially assembled at the exit from anaphase of mitosis and disassembled as cells enter S phase. Multi-mono-ubiquitinated by OBI1; ubiquitination is important for efficient DNA replication origin site activation. Ubiquitination levels are low in mitotic and early G1-phAse cells and are induced in late G1-/early S-phase, peaking in S-phase and decrease toward the end of the cell cycle.

Its subcellular location is the nucleus. The protein localises to the chromosome. Component of the origin recognition complex (ORC) that binds origins of replication. DNA-binding is ATP-dependent. The specific DNA sequences that define origins of replication have not been identified yet. ORC is required to assemble the pre-replication complex necessary to initiate DNA replication. Binds histone H3 and H4 trimethylation marks H3K9me3, H3K27me3 and H4K20me3. The chain is Origin recognition complex subunit 3 (Orc3) from Rattus norvegicus (Rat).